A 328-amino-acid polypeptide reads, in one-letter code: DNA-directed RNA polymerase subunit alpha (328 aa).

Residues Met-1–Glu-234 form an alpha N-terminal domain (alpha-NTD) region. The interval Ile-248–Asp-328 is alpha C-terminal domain (alpha-CTD).

The protein belongs to the RNA polymerase alpha chain family. Homodimer. The RNAP catalytic core consists of 2 alpha, 1 beta, 1 beta' and 1 omega subunit. When a sigma factor is associated with the core the holoenzyme is formed, which can initiate transcription.

It catalyses the reaction RNA(n) + a ribonucleoside 5'-triphosphate = RNA(n+1) + diphosphate. DNA-dependent RNA polymerase catalyzes the transcription of DNA into RNA using the four ribonucleoside triphosphates as substrates. The protein is DNA-directed RNA polymerase subunit alpha of Cellvibrio japonicus (strain Ueda107) (Pseudomonas fluorescens subsp. cellulosa).